The sequence spans 382 residues: U11/U12 small nuclear ribonucleoprotein 59 kDa protein (382 aa).

A coiled-coil region spans residues 31–63; sequence NTKNITDQLKQLQDTLNLAKSMEKELEALKMIK. A disordered region spans residues 274 to 297; sequence SEENTTLTTSNKTNNDTDKDSNTN. Positions 277–287 are enriched in low complexity; the sequence is NTTLTTSNKTN.

As to quaternary structure, component of the U11/U12 snRNPs that are part of the U12-type spliceosome.

It localises to the nucleus. This chain is U11/U12 small nuclear ribonucleoprotein 59 kDa protein (SNRNP59), found in Arabidopsis thaliana (Mouse-ear cress).